Here is a 173-residue protein sequence, read N- to C-terminus: Flagellar biosynthetic protein FliV (173 aa).

This sequence belongs to the FliB family.

In terms of biological role, required for the secretion of flagellin and expression of motility. The chain is Flagellar biosynthetic protein FliV (fliV) from Salmonella muenchen.